We begin with the raw amino-acid sequence, 207 residues long: Outer-membrane lipoprotein carrier protein (207 aa).

The N-terminal stretch at 1–22 (MKLSEKFCVFLFFLLFTSTTHA) is a signal peptide.

The protein belongs to the LolA family. As to quaternary structure, monomer.

It is found in the periplasm. Participates in the translocation of lipoproteins from the inner membrane to the outer membrane. Only forms a complex with a lipoprotein if the residue after the N-terminal Cys is not an aspartate (The Asp acts as a targeting signal to indicate that the lipoprotein should stay in the inner membrane). The polypeptide is Outer-membrane lipoprotein carrier protein (Nitrosospira multiformis (strain ATCC 25196 / NCIMB 11849 / C 71)).